A 138-amino-acid polypeptide reads, in one-letter code: Putative nickel-responsive regulator (138 aa).

Ni(2+) contacts are provided by His78, His89, His91, and Cys97.

Belongs to the transcriptional regulatory CopG/NikR family. Ni(2+) is required as a cofactor.

Functionally, transcriptional regulator. The polypeptide is Putative nickel-responsive regulator (Pyrococcus furiosus (strain ATCC 43587 / DSM 3638 / JCM 8422 / Vc1)).